A 901-amino-acid chain; its full sequence is MAEVTVKSLAAEIQTSVERLVQQLADAGINKSPDDSVSPQEREALLAHLNREHGGSSDKLTLQRKTRSTLSVPGTGGKSKSVQIEVRKKRTYVKSDAAAQQAEAEALAKREAEEQVKREAEEQTQRDMAELAKREAAEQAKRQQEEQAKREAAEKAKREAAEKEKVTNQHIDEKTKAAQAEKAKREAEAAELKRKAEEEARRKLEEDARKVAEEARRMAEANEGKWTENASEEDNSDYHVTTSHHAREAEDENDRQVEGDRRARGRGGKAAKQKKGSKLSESKADREEARAVNRGGKGGKRKPSSLQQGFTKPAQAVNRDVVIGETITVAELANKMAVKGSQVIKAMMKMGAMATINQVIDQETAQLVAEDMGHKVILRRENELEEAVLSDRDTGAAAEPRAPVVTIMGHVDHGKTSLLDYIRSTKVAAGEAGGITQHIGAYHVQTDNGMITFLDTPGHAAFTAMRARGAQATDIVVLVVAADDGVMPQTIEAVQHAKAAGVPLVVAVNKIDKPEADPDRVKNELSQYGVMPEEWGGEAQFVHVSAKAGTGIDELLDAILLQAEVLELKAVRNGMASGVVIESFLDKGRGPVATVLVREGTLNKGDIVLCGFEYGRVRAMRDELGREITEAGPSIPVEILGMSGVPAAGDEATVVRDEKKAREVALYRQGKFREVKLARQQKAKLENMFSNMVEGEVSELNIVLKADVQGSVEAIADSLRKLSTDEVKVKIVGSGVGGITETDATLAAASNAILLGFNVRADASARRVVEAENLDLRYYSVIYDLIDEVKQAMSGMLAPEYKQEIIGLAEVRDVFKSPKFGAIAGCMVTEGVVKRHSPIRVLRENVVIYEGELESLRRFKDDVNEVRNGMECGIGVKNYNDVRPGDVIEVFETIEVKRTID.

Residues 48 to 313 (HLNREHGGSS…SSLQQGFTKP (266 aa)) are disordered. Positions 68–82 (STLSVPGTGGKSKSV) are enriched in polar residues. Positions 106–226 (ALAKREAEEQ…RMAEANEGKW (121 aa)) are enriched in basic and acidic residues. A compositionally biased stretch (basic residues) spans 263-277 (ARGRGGKAAKQKKGS). Residues 278–291 (KLSESKADREEARA) show a composition bias toward basic and acidic residues. Residues 400–569 (PRAPVVTIMG…LLQAEVLELK (170 aa)) enclose the tr-type G domain. Residues 409–416 (GHVDHGKT) form a G1 region. 409–416 (GHVDHGKT) contacts GTP. Residues 434–438 (GITQH) are G2. The interval 455–458 (DTPG) is G3. GTP-binding positions include 455–459 (DTPGH) and 509–512 (NKID). The segment at 509-512 (NKID) is G4. Residues 545-547 (SAK) are G5.

The protein belongs to the TRAFAC class translation factor GTPase superfamily. Classic translation factor GTPase family. IF-2 subfamily.

Its subcellular location is the cytoplasm. Its function is as follows. One of the essential components for the initiation of protein synthesis. Protects formylmethionyl-tRNA from spontaneous hydrolysis and promotes its binding to the 30S ribosomal subunits. Also involved in the hydrolysis of GTP during the formation of the 70S ribosomal complex. The polypeptide is Translation initiation factor IF-2 (Edwardsiella ictaluri (strain 93-146)).